The primary structure comprises 332 residues: Biotin synthase (332 aa).

Residues 53–282 (HFGKKVKLNM…TKEIRISGGR (230 aa)) enclose the Radical SAM core domain. [4Fe-4S] cluster-binding residues include C71, C75, and C78. [2Fe-2S] cluster is bound by residues C115, C147, C207, and R277.

The protein belongs to the radical SAM superfamily. Biotin synthase family. Homodimer. Requires [4Fe-4S] cluster as cofactor. It depends on [2Fe-2S] cluster as a cofactor.

The catalysed reaction is (4R,5S)-dethiobiotin + (sulfur carrier)-SH + 2 reduced [2Fe-2S]-[ferredoxin] + 2 S-adenosyl-L-methionine = (sulfur carrier)-H + biotin + 2 5'-deoxyadenosine + 2 L-methionine + 2 oxidized [2Fe-2S]-[ferredoxin]. Its pathway is cofactor biosynthesis; biotin biosynthesis; biotin from 7,8-diaminononanoate: step 2/2. Catalyzes the conversion of dethiobiotin (DTB) to biotin by the insertion of a sulfur atom into dethiobiotin via a radical-based mechanism. This chain is Biotin synthase, found in Bacillus cereus (strain ATCC 14579 / DSM 31 / CCUG 7414 / JCM 2152 / NBRC 15305 / NCIMB 9373 / NCTC 2599 / NRRL B-3711).